The primary structure comprises 173 residues: Crossover junction endodeoxyribonuclease RuvC (173 aa).

Residues Asp-8, Glu-67, and Asp-139 contribute to the active site. Mg(2+)-binding residues include Asp-8, Glu-67, and Asp-139.

It belongs to the RuvC family. Homodimer which binds Holliday junction (HJ) DNA. The HJ becomes 2-fold symmetrical on binding to RuvC with unstacked arms; it has a different conformation from HJ DNA in complex with RuvA. In the full resolvosome a probable DNA-RuvA(4)-RuvB(12)-RuvC(2) complex forms which resolves the HJ. Requires Mg(2+) as cofactor.

Its subcellular location is the cytoplasm. It catalyses the reaction Endonucleolytic cleavage at a junction such as a reciprocal single-stranded crossover between two homologous DNA duplexes (Holliday junction).. Its function is as follows. The RuvA-RuvB-RuvC complex processes Holliday junction (HJ) DNA during genetic recombination and DNA repair. Endonuclease that resolves HJ intermediates. Cleaves cruciform DNA by making single-stranded nicks across the HJ at symmetrical positions within the homologous arms, yielding a 5'-phosphate and a 3'-hydroxyl group; requires a central core of homology in the junction. The consensus cleavage sequence is 5'-(A/T)TT(C/G)-3'. Cleavage occurs on the 3'-side of the TT dinucleotide at the point of strand exchange. HJ branch migration catalyzed by RuvA-RuvB allows RuvC to scan DNA until it finds its consensus sequence, where it cleaves and resolves the cruciform DNA. In Serratia proteamaculans (strain 568), this protein is Crossover junction endodeoxyribonuclease RuvC.